The chain runs to 473 residues: MPGLPKNEHEALEFLKSNNIKWVDLQFTDLLGKLQHITIPSNEFDESSFKVGFGKLDGSSIKGFTSIYESDMVLLPIPQTMTLIPWMQGVARVLTKVFWGGGKGRFERDPRGIAEEAEKYQSEQGYVSYFGPELEFFVFDKVEVDASLPQSGTGYKIHSREAPWSKNGGYVIRYKEGYYPASPVDQLMDIRLEIISTLVDYFGFTIEAAHHEVATAGQGEIDFRFSTLADTADKVQVLKYVTKNIASKRGMIATFMPKPFFGDNGSGMHTHFSLWTKDGKNLMYDPNDEYAELSQIGRYIIGGLLEHGRALSAIVAPTTNSYRRLVPGYEAPVYLVWSKSNRSAAIRIPAYYKGMEKAKRLEYRPPDPSSNPYLVFSAILMAGLDGIRRKLDPGDPVDENIYHMSEEKKRSLKIRELPGSLDEALNELESDNEFLKPVFNSSILQAYLDLKKEEAKMMQLYPHPMEIYQYLDS.

Residues 18–102 (NNIKWVDLQF…VLTKVFWGGG (85 aa)) form the GS beta-grasp domain. The GS catalytic domain occupies 110-473 (PRGIAEEAEK…PMEIYQYLDS (364 aa)). Residues glutamate 133 and glutamate 135 each coordinate Mg(2+). Glutamate 207 lines the ATP pocket. Residues glutamate 212 and glutamate 220 each coordinate Mg(2+). L-glutamate is bound by residues 264-265 (NG) and glycine 265. Histidine 269 is a Mg(2+) binding site. ATP contacts are provided by residues 271 to 273 (HFS) and serine 273. L-glutamate is bound by residues arginine 324, glutamate 330, and arginine 342. ATP contacts are provided by arginine 342, arginine 347, and lysine 357. Residue glutamate 362 participates in Mg(2+) binding. Position 364 (arginine 364) interacts with L-glutamate.

Belongs to the glutamine synthetase family. In terms of assembly, oligomer of 12 subunits arranged in the form of two hexagons. Mg(2+) is required as a cofactor. It depends on Mn(2+) as a cofactor.

Its subcellular location is the cytoplasm. The catalysed reaction is L-glutamate + NH4(+) + ATP = L-glutamine + ADP + phosphate + H(+). With respect to regulation, strongly inhibited by glycine and L-alanine. AMP at 10 mM displays a very weak inhibitory effect. The activity of this enzyme is not controlled by adenylation. Probably involved in nitrogen metabolism via ammonium assimilation. Catalyzes the ATP-dependent biosynthesis of glutamine from glutamate and ammonia. The polypeptide is Glutamine synthetase (Sulfolobus acidocaldarius (strain ATCC 33909 / DSM 639 / JCM 8929 / NBRC 15157 / NCIMB 11770)).